A 331-amino-acid polypeptide reads, in one-letter code: MKIGVMGAGSWGTTLAKVFSDAGCDVTLWARREEVAREINTEHTNSTYLRGIALPHTLTATTQPTQALCDADVVVLAVPSQTLRGNLAEWCADIPQDALLLSLAKGIEKETFLRMSEVIAEVTGAQPDKVAVLSGPNLAREIAEEQPAATVIACTNEKNAQRIQHALAAPYFRPYTNTDVIGCEIGGACKNVIALACGMASGRGLGENTLATLMTRGLAEISRLGVAMGADPRTLSGLAGLGDLVATCSSPLSRNRTFGARLGEGKTLDEARAATNGQVAEGVISSQSIARLADSLGVDMPITRAVFGVCHRDQNVADMVAALMGRTKKSE.

Residues serine 10, tryptophan 11, arginine 31, arginine 32, and lysine 105 each coordinate NADPH. 2 residues coordinate sn-glycerol 3-phosphate: lysine 105 and glycine 135. Alanine 139 contacts NADPH. The sn-glycerol 3-phosphate site is built by lysine 190, aspartate 243, serine 253, arginine 254, and asparagine 255. Residue lysine 190 is the Proton acceptor of the active site. Arginine 254 provides a ligand contact to NADPH. Residues valine 279 and glutamate 281 each coordinate NADPH.

The protein belongs to the NAD-dependent glycerol-3-phosphate dehydrogenase family.

The protein resides in the cytoplasm. The catalysed reaction is sn-glycerol 3-phosphate + NAD(+) = dihydroxyacetone phosphate + NADH + H(+). It catalyses the reaction sn-glycerol 3-phosphate + NADP(+) = dihydroxyacetone phosphate + NADPH + H(+). The protein operates within membrane lipid metabolism; glycerophospholipid metabolism. Its function is as follows. Catalyzes the reduction of the glycolytic intermediate dihydroxyacetone phosphate (DHAP) to sn-glycerol 3-phosphate (G3P), the key precursor for phospholipid synthesis. This Corynebacterium diphtheriae (strain ATCC 700971 / NCTC 13129 / Biotype gravis) protein is Glycerol-3-phosphate dehydrogenase [NAD(P)+].